Consider the following 160-residue polypeptide: Small ribosomal subunit protein uS17z (160 aa).

Belongs to the universal ribosomal protein uS17 family.

It is found in the cytoplasm. In Arabidopsis thaliana (Mouse-ear cress), this protein is Small ribosomal subunit protein uS17z (RPS11A).